The primary structure comprises 324 residues: uncharacterized protein (324 aa).

An HTH lysR-type domain is found at 6–63 (LKYRELKIISVIAASENISHAATVLGIAQANVSKYLADFESKVGLKVFDRTTRQLMLT). Residues 23–42 (ISHAATVLGIAQANVSKYLA) constitute a DNA-binding region (H-T-H motif).

The protein belongs to the LysR transcriptional regulatory family.

This is an uncharacterized protein from Escherichia coli (strain K12).